The sequence spans 459 residues: Prenyltransferase penI (459 aa).

L-tryptophan is bound by residues 107-108 and E111; that span reads VV. Substrate contacts are provided by R126, R276, K278, Y280, and Y384.

It belongs to the tryptophan dimethylallyltransferase family.

The catalysed reaction is quinolinone B + dimethylallyl diphosphate = peniprequinolone + diphosphate. It functions in the pathway secondary metabolite biosynthesis. The protein operates within alkaloid biosynthesis. It participates in mycotoxin biosynthesis. Functionally, prenyltransferase; part of the gene cluster that mediates the biosynthesis of penigequinolones, potent insecticidal alkaloids that contain a highly modified 10-carbon prenyl group. The first stage is catalyzed by the nonribosomal peptide synthetase penN that condenses anthranilic acid and O-methyl-L-tyrosine to produce 4'-methoxycyclopeptin. 4'-methoxycyclopeptin is then converted to 4'-methoxydehydrocyclopeptin by the ketoglutarate-dependent dioxygenase penM through dehydrogenation to form a double bond between C-alpha and C-beta of the O-methyltyrosine side chain. PenM also converts its first product methoxydehydrocyclopeptin to 4'-methoxycyclopenin. The following conversion of 4'methoxycyclopenin into 4'-methoxyviridicatin is catalyzed by the cyclopenase penL. 4'-methoxyviridicatin is the precursor of quinolone natural products, and is further converted to quinolinone B. The prenyltransferase penI then catalyzes the canonical Friedel-Crafts alkylation of quinolinone B with dimethylallyl cation to yield dimethylallyl quinolone, which is subjected to FAD-dependent dehydrogenation by the FAD-linked oxidoreductase penH to yield conjugated aryl diene. The delta(3') double bond then serves as the site of the second alkylation with DMAPP catalyzed by the prenyltransferase penG to yield a carbenium ion intermediate, which can be attacked by H(2)O to yield a styrenyl quinolone containing a C3'-hydroxyprenyl chain, or undergo cyclization to yield yaequinolones J1 and J2. The conversion of the styrenyl quinolone into the tetrahydrofuran-containing yaequinolone C is performed by the FAD-dependent monooxygenase penE and involves epoxidation of the terminal C7'-C8' olefin, followed by epoxide ring opening initiated by the C3' hydroxyl group. The predicted cysteine hydrolase penJ acts as an epoxide hydrolase that enhances the rate of the 5-exo-tet cyclization step, increasing the yield of yaequinolone C. PenF catalyzes the cationic rearrangement of the epoxide formed by penE (before ring opening to produce yaequinolone C) into yaequinolone D. Finally, the short-chain dehydrogenase/reductase (SDR)-like reductase penD, catalyzes both the dehydration of yaequinolone D and the reduction of the resulting oxonium to yield penigequinolone. The protein is Prenyltransferase penI of Penicillium thymicola.